The sequence spans 196 residues: MKPLVVFVLGGPGAGKGTQCARIVEKYGYTHLSAGELLRDERKNPDSQYGELIEKYIKEGKIVPVEITISLLKREMDQTMAANAQKNKFLIDGFPRNQDNLQGWNKTMDGKADVSFVLFFDCNNEICIERCLERGKSSGRSDDNRESLEKRIQTYLESTKPIIDLYEEMGKVKKIDASKSVDEVFGEVVKIFDKEG.

13–18 contributes to the ATP binding site; that stretch reads GAGKGT. Ser-33 carries the phosphoserine modification. An NMP region spans residues 33–63; the sequence is SAGELLRDERKNPDSQYGELIEKYIKEGKIV. Arg-39 is an a ribonucleoside 5'-phosphate binding site. N6-acetyllysine occurs at positions 43 and 55. A ribonucleoside 5'-phosphate is bound at residue 61–63; it reads KIV. Lys-73 is covalently cross-linked (Glycyl lysine isopeptide (Lys-Gly) (interchain with G-Cter in SUMO2)). Residue 93–96 coordinates a ribonucleoside 5'-phosphate; sequence GFPR. Asn-100 provides a ligand contact to CMP. N6-succinyllysine is present on Lys-106. The LID stretch occupies residues 133–143; it reads ERGKSSGRSDD. Residue Arg-134 coordinates ATP. Positions 140 and 151 each coordinate a ribonucleoside 5'-phosphate. Lys-179 serves as a coordination point for ATP. Residue Ser-180 is modified to Phosphoserine.

The protein belongs to the adenylate kinase family. UMP-CMP kinase subfamily. In terms of assembly, monomer. It depends on Mg(2+) as a cofactor.

It is found in the nucleus. It localises to the cytoplasm. The catalysed reaction is CMP + ATP = CDP + ADP. The enzyme catalyses dCMP + ATP = dCDP + ADP. It catalyses the reaction UMP + ATP = UDP + ADP. It carries out the reaction a 2'-deoxyribonucleoside 5'-diphosphate + ATP = a 2'-deoxyribonucleoside 5'-triphosphate + ADP. The catalysed reaction is a ribonucleoside 5'-diphosphate + ATP = a ribonucleoside 5'-triphosphate + ADP. Its function is as follows. Catalyzes the phosphorylation of pyrimidine nucleoside monophosphates at the expense of ATP. Plays an important role in de novo pyrimidine nucleotide biosynthesis. Has preference for UMP and CMP as phosphate acceptors. Also displays broad nucleoside diphosphate kinase activity. The sequence is that of UMP-CMP kinase (Cmpk1) from Mus musculus (Mouse).